The primary structure comprises 533 residues: Bifunctional purine biosynthesis protein PurH (533 aa).

Positions 1-148 (MQPNRPIRQA…KNHQDVAIVV (148 aa)) constitute an MGS-like domain.

The protein belongs to the PurH family.

The catalysed reaction is (6R)-10-formyltetrahydrofolate + 5-amino-1-(5-phospho-beta-D-ribosyl)imidazole-4-carboxamide = 5-formamido-1-(5-phospho-D-ribosyl)imidazole-4-carboxamide + (6S)-5,6,7,8-tetrahydrofolate. The enzyme catalyses IMP + H2O = 5-formamido-1-(5-phospho-D-ribosyl)imidazole-4-carboxamide. The protein operates within purine metabolism; IMP biosynthesis via de novo pathway; 5-formamido-1-(5-phospho-D-ribosyl)imidazole-4-carboxamide from 5-amino-1-(5-phospho-D-ribosyl)imidazole-4-carboxamide (10-formyl THF route): step 1/1. It participates in purine metabolism; IMP biosynthesis via de novo pathway; IMP from 5-formamido-1-(5-phospho-D-ribosyl)imidazole-4-carboxamide: step 1/1. This chain is Bifunctional purine biosynthesis protein PurH, found in Pasteurella multocida (strain Pm70).